Consider the following 377-residue polypeptide: Chaperone protein DnaJ (377 aa).

The region spanning Asp4 to Gly69 is the J domain. The CR-type zinc-finger motif lies at Gly131–Val213. Positions 144, 147, 161, 164, 187, 190, 201, and 204 each coordinate Zn(2+). CXXCXGXG motif repeat units lie at residues Cys144–Gly151, Cys161–Gly168, Cys187–Gly194, and Cys201–Gly208.

It belongs to the DnaJ family. In terms of assembly, homodimer. It depends on Zn(2+) as a cofactor.

It localises to the cytoplasm. In terms of biological role, participates actively in the response to hyperosmotic and heat shock by preventing the aggregation of stress-denatured proteins and by disaggregating proteins, also in an autonomous, DnaK-independent fashion. Unfolded proteins bind initially to DnaJ; upon interaction with the DnaJ-bound protein, DnaK hydrolyzes its bound ATP, resulting in the formation of a stable complex. GrpE releases ADP from DnaK; ATP binding to DnaK triggers the release of the substrate protein, thus completing the reaction cycle. Several rounds of ATP-dependent interactions between DnaJ, DnaK and GrpE are required for fully efficient folding. Also involved, together with DnaK and GrpE, in the DNA replication of plasmids through activation of initiation proteins. In Desulfitobacterium hafniense (strain DSM 10664 / DCB-2), this protein is Chaperone protein DnaJ.